A 316-amino-acid polypeptide reads, in one-letter code: 4-hydroxy-3-methylbut-2-enyl diphosphate reductase (316 aa).

Cysteine 12 provides a ligand contact to [4Fe-4S] cluster. 2 residues coordinate (2E)-4-hydroxy-3-methylbut-2-enyl diphosphate: histidine 41 and histidine 74. Dimethylallyl diphosphate-binding residues include histidine 41 and histidine 74. Isopentenyl diphosphate contacts are provided by histidine 41 and histidine 74. Cysteine 96 lines the [4Fe-4S] cluster pocket. (2E)-4-hydroxy-3-methylbut-2-enyl diphosphate is bound at residue histidine 124. Residue histidine 124 coordinates dimethylallyl diphosphate. Histidine 124 contacts isopentenyl diphosphate. Glutamate 126 (proton donor) is an active-site residue. Position 167 (threonine 167) interacts with (2E)-4-hydroxy-3-methylbut-2-enyl diphosphate. A [4Fe-4S] cluster-binding site is contributed by cysteine 197. Residues serine 225, serine 226, asparagine 227, and serine 269 each contribute to the (2E)-4-hydroxy-3-methylbut-2-enyl diphosphate site. The dimethylallyl diphosphate site is built by serine 225, serine 226, asparagine 227, and serine 269. Positions 225, 226, 227, and 269 each coordinate isopentenyl diphosphate.

The protein belongs to the IspH family. Homodimer. It depends on [4Fe-4S] cluster as a cofactor.

The enzyme catalyses isopentenyl diphosphate + 2 oxidized [2Fe-2S]-[ferredoxin] + H2O = (2E)-4-hydroxy-3-methylbut-2-enyl diphosphate + 2 reduced [2Fe-2S]-[ferredoxin] + 2 H(+). It catalyses the reaction dimethylallyl diphosphate + 2 oxidized [2Fe-2S]-[ferredoxin] + H2O = (2E)-4-hydroxy-3-methylbut-2-enyl diphosphate + 2 reduced [2Fe-2S]-[ferredoxin] + 2 H(+). It participates in isoprenoid biosynthesis; dimethylallyl diphosphate biosynthesis; dimethylallyl diphosphate from (2E)-4-hydroxy-3-methylbutenyl diphosphate: step 1/1. It functions in the pathway isoprenoid biosynthesis; isopentenyl diphosphate biosynthesis via DXP pathway; isopentenyl diphosphate from 1-deoxy-D-xylulose 5-phosphate: step 6/6. In terms of biological role, catalyzes the conversion of 1-hydroxy-2-methyl-2-(E)-butenyl 4-diphosphate (HMBPP) into a mixture of isopentenyl diphosphate (IPP) and dimethylallyl diphosphate (DMAPP). Acts in the terminal step of the DOXP/MEP pathway for isoprenoid precursor biosynthesis. In Klebsiella pneumoniae (strain 342), this protein is 4-hydroxy-3-methylbut-2-enyl diphosphate reductase.